The sequence spans 417 residues: D-amino acid dehydrogenase (417 aa).

Residue 3–17 (IIVLGAGVIGVTSAY) participates in FAD binding.

This sequence belongs to the DadA oxidoreductase family. It depends on FAD as a cofactor.

The catalysed reaction is a D-alpha-amino acid + A + H2O = a 2-oxocarboxylate + AH2 + NH4(+). The protein operates within amino-acid degradation; D-alanine degradation; NH(3) and pyruvate from D-alanine: step 1/1. Its function is as follows. Oxidative deamination of D-amino acids. This is D-amino acid dehydrogenase from Azorhizobium caulinodans (strain ATCC 43989 / DSM 5975 / JCM 20966 / LMG 6465 / NBRC 14845 / NCIMB 13405 / ORS 571).